A 304-amino-acid polypeptide reads, in one-letter code: Dihydroorotate dehydrogenase B (NAD(+)), catalytic subunit (304 aa).

FMN is bound by residues serine 21 and 45–46 (KA). Substrate is bound by residues lysine 45 and 69–73 (NAIGL). Positions 99 and 127 each coordinate FMN. Asparagine 127 serves as a coordination point for substrate. Residue cysteine 130 is the Nucleophile of the active site. FMN contacts are provided by lysine 165 and isoleucine 191. Substrate is bound at residue 192-193 (NT). Residues glycine 217, 243–244 (GG), and 265–266 (GT) each bind FMN.

This sequence belongs to the dihydroorotate dehydrogenase family. Type 1 subfamily. As to quaternary structure, heterotetramer of 2 PyrK and 2 PyrD type B subunits. FMN serves as cofactor.

It localises to the cytoplasm. It carries out the reaction (S)-dihydroorotate + NAD(+) = orotate + NADH + H(+). Its pathway is pyrimidine metabolism; UMP biosynthesis via de novo pathway; orotate from (S)-dihydroorotate (NAD(+) route): step 1/1. In terms of biological role, catalyzes the conversion of dihydroorotate to orotate with NAD(+) as electron acceptor. This Listeria welshimeri serovar 6b (strain ATCC 35897 / DSM 20650 / CCUG 15529 / CIP 8149 / NCTC 11857 / SLCC 5334 / V8) protein is Dihydroorotate dehydrogenase B (NAD(+)), catalytic subunit (pyrD).